The chain runs to 153 residues: NAD(P)H-quinone oxidoreductase subunit N (153 aa).

The protein belongs to the complex I NdhN subunit family. NDH-1 can be composed of about 15 different subunits; different subcomplexes with different compositions have been identified which probably have different functions.

Its subcellular location is the cellular thylakoid membrane. The enzyme catalyses a plastoquinone + NADH + (n+1) H(+)(in) = a plastoquinol + NAD(+) + n H(+)(out). It carries out the reaction a plastoquinone + NADPH + (n+1) H(+)(in) = a plastoquinol + NADP(+) + n H(+)(out). In terms of biological role, NDH-1 shuttles electrons from an unknown electron donor, via FMN and iron-sulfur (Fe-S) centers, to quinones in the respiratory and/or the photosynthetic chain. The immediate electron acceptor for the enzyme in this species is believed to be plastoquinone. Couples the redox reaction to proton translocation, and thus conserves the redox energy in a proton gradient. Cyanobacterial NDH-1 also plays a role in inorganic carbon-concentration. The protein is NAD(P)H-quinone oxidoreductase subunit N of Prochlorococcus marinus (strain MIT 9303).